Consider the following 528-residue polypeptide: MQSPVFVMNTNGNRQVGHKAQMSNIQAAKAVADVIRTCLGPRAMLKMLLDPVGSVLLTNDGHAILREIEVAHPAAKSMIELARTQDEEVGDGTTSVIILAGEILAAASPLLDRKIHPVVMIRSFKQALEDALSIIDEITLPVNVDDNAEMFRLIRTCIGTKLVARWSDLMCHLALRAVRTVASTSNGRMEIDIKRYARVEKVPGGEIESSCVLDGVMLNKDVTHPKMRRRIENPRIVLLDCPLEYRKGESQTNIEISKDTDWNRILEIEEEQVKRMCDYIIAVKPDLVITEKGVSDLAQHYLLKANITALRRTRKSDNNRIARACGANIVNRLEDLREKDVGTGCGLFYIDKLGDEYYTFLTGCKNPKACTILLRGPSKDIINEVERNLQDAMAVARNVFFHPKLSPGGGATEMAVSVRLAEKARSIEGVAQWPYRAVADAIEIIPRTLVQNCGANPIKALTELRAKHAEGQHSFGIDGETGRVVDMHEYGVWEPEAVKLQSIKTAIESACLLLRVDDIVSGVRKHSE.

A Phosphoserine modification is found at serine 250. A disulfide bridge connects residues cysteine 364 and cysteine 370.

The protein belongs to the TCP-1 chaperonin family. As to quaternary structure, heterooligomeric complex of about 850 to 900 kDa that forms two stacked rings, 12 to 16 nm in diameter.

It localises to the cytoplasm. In terms of biological role, molecular chaperone; assists the folding of proteins upon ATP hydrolysis. Known to play a role, in vitro, in the folding of actin and tubulin. In Schizosaccharomyces pombe (strain 972 / ATCC 24843) (Fission yeast), this protein is T-complex protein 1 subunit gamma (cct3).